Here is a 444-residue protein sequence, read N- to C-terminus: Tubulin beta-6 chain (444 aa).

GTP is bound by residues Gln-11, Glu-69, Ser-138, Gly-142, Thr-143, Gly-144, Asn-204, and Asn-226. Position 69 (Glu-69) interacts with Mg(2+).

This sequence belongs to the tubulin family. As to quaternary structure, dimer of alpha and beta chains. A typical microtubule is a hollow water-filled tube with an outer diameter of 25 nm and an inner diameter of 15 nM. Alpha-beta heterodimers associate head-to-tail to form protofilaments running lengthwise along the microtubule wall with the beta-tubulin subunit facing the microtubule plus end conferring a structural polarity. Microtubules usually have 13 protofilaments but different protofilament numbers can be found in some organisms and specialized cells. Requires Mg(2+) as cofactor. Expressed in roots, leaf sheaths, anthers, and suspension cultured cells.

The protein resides in the cytoplasm. The protein localises to the cytoskeleton. In terms of biological role, tubulin is the major constituent of microtubules, a cylinder consisting of laterally associated linear protofilaments composed of alpha- and beta-tubulin heterodimers. Microtubules grow by the addition of GTP-tubulin dimers to the microtubule end, where a stabilizing cap forms. Below the cap, tubulin dimers are in GDP-bound state, owing to GTPase activity of alpha-tubulin. The sequence is that of Tubulin beta-6 chain (TUBB6) from Oryza sativa subsp. japonica (Rice).